We begin with the raw amino-acid sequence, 266 residues long: Serine/arginine-rich splicing factor 12 (266 aa).

Residues 42 to 266 are disordered; the sequence is ARPRRPRAPR…SRSYHHKNSW (225 aa). Residues 43-62 are compositionally biased toward basic residues; the sequence is RPRRPRAPRPRLRLRGRPGR. Residues 102 to 114 show a composition bias toward basic and acidic residues; the sequence is KSKERHLCSPSDH. Over residues 115–127 the composition is skewed to basic residues; it reads RRSRSPSQRRSRS. Basic and acidic residues predominate over residues 133–144; the sequence is GRDRRHSDSLKE. The span at 151 to 166 shows a compositional bias: low complexity; it reads SYSQSKSRSKSLPRQS. A compositionally biased stretch (basic residues) spans 183-194; that stretch reads GRSRSKSLPKRS. Composition is skewed to polar residues over residues 202–212 and 235–244; these read SRSPQKQTGSG and AYTSSGSKTQ. A compositionally biased stretch (basic residues) spans 245–266; that stretch reads TTKHSHLRSHSRSRSYHHKNSW.

This sequence belongs to the splicing factor SR family.

The protein localises to the nucleus. Functionally, splicing factor that seems to antagonize SR proteins in pre-mRNA splicing regulation. In Mus musculus (Mouse), this protein is Serine/arginine-rich splicing factor 12 (Srsf12).